Here is a 265-residue protein sequence, read N- to C-terminus: Indole-3-glycerol phosphate synthase (265 aa).

The protein belongs to the TrpC family.

The catalysed reaction is 1-(2-carboxyphenylamino)-1-deoxy-D-ribulose 5-phosphate + H(+) = (1S,2R)-1-C-(indol-3-yl)glycerol 3-phosphate + CO2 + H2O. The protein operates within amino-acid biosynthesis; L-tryptophan biosynthesis; L-tryptophan from chorismate: step 4/5. The chain is Indole-3-glycerol phosphate synthase from Xanthomonas campestris pv. campestris (strain 8004).